Here is a 438-residue protein sequence, read N- to C-terminus: uncharacterized protein (438 aa).

Position 59 (His-59) interacts with Zn(2+). Glu-62 acts as the Proton acceptor in catalysis. Zn(2+) contacts are provided by His-63 and Glu-139.

It belongs to the peptidase M16 family. Zn(2+) serves as cofactor.

This is an uncharacterized protein from Mycobacterium bovis (strain ATCC BAA-935 / AF2122/97).